The primary structure comprises 537 residues: 5,6-dihydroxyindole-2-carboxylic acid oxidase (537 aa).

A signal peptide spans 1–24 (MKSPTLLSLGYMFLVLLFFQQAWA). Residues 25–477 (QFPRECATIE…WPSRSFSISE (453 aa)) lie on the Lumenal, melanosome side of the membrane. 5 disulfide bridges follow: cysteine 30–cysteine 41, cysteine 42–cysteine 65, cysteine 56–cysteine 99, cysteine 101–cysteine 110, and cysteine 113–cysteine 122. N-linked (GlcNAc...) asparagine glycans are attached at residues asparagine 96 and asparagine 104. Asparagine 181 carries an N-linked (GlcNAc...) asparagine glycan. The Zn(2+) site is built by histidine 192, histidine 215, and histidine 224. 2 disulfides stabilise this stretch: cysteine 258/cysteine 261 and cysteine 290/cysteine 303. 2 N-linked (GlcNAc...) asparagine glycosylation sites follow: asparagine 304 and asparagine 350. Residues histidine 377 and histidine 381 each coordinate Zn(2+). Asparagine 385 is a glycosylation site (N-linked (GlcNAc...) asparagine). Histidine 404 serves as a coordination point for Zn(2+). The helical transmembrane segment at 478 to 501 (IVTIAVVAALSLVAVIFAGASCLI) threads the bilayer. The Cytoplasmic segment spans residues 502 to 537 (RARSNMDEANQPLLTDQYQHYIEEYEKIHNPNQSVV).

This sequence belongs to the tyrosinase family. As to quaternary structure, monomer. Interacts with ATP7A. Interacts with SLC45A2. Cu(2+) is required as a cofactor. Requires Zn(2+) as cofactor. Post-translationally, glycosylated.

The protein localises to the melanosome membrane. The enzyme catalyses 2 5,6-dihydroxyindole-2-carboxylate + O2 = 2 indole-5,6-quinone-2-carboxylate + 2 H2O. Its pathway is pigment biosynthesis; melanin biosynthesis. Plays a role in melanin biosynthesis. Catalyzes the oxidation of 5,6-dihydroxyindole-2-carboxylic acid (DHICA) into indole-5,6-quinone-2-carboxylic acid. May regulate or influence the type of melanin synthesized. Also to a lower extent, capable of hydroxylating tyrosine and producing melanin. The polypeptide is 5,6-dihydroxyindole-2-carboxylic acid oxidase (TYRP1) (Bos taurus (Bovine)).